The chain runs to 76 residues: U7-lycotoxin-Ls1c (76 aa).

An N-terminal signal peptide occupies residues M1–A22. Residues Q23 to G26 constitute a propeptide that is removed on maturation.

This sequence belongs to the neurotoxin 19 (CSTX) family. 07 (U7-Lctx) subfamily. In terms of processing, contains 4 disulfide bonds. Expressed by the venom gland.

It localises to the secreted. The chain is U7-lycotoxin-Ls1c from Lycosa singoriensis (Wolf spider).